Consider the following 448-residue polypeptide: MREIVHVQAGQCGNQIGAKFWEVISDEHGVQPDGTYKGDSDLQIERINVYYNEANGGKYVPRAVLVDLEPGTMDSIRGGEFGQLFRPDNFVFGQSGAGNNWAKGHYTEGAELVDNVLDVIRKEAEGCDCLQGFQLTHSLGGGTGSGMGTLLISKIREEYPDRIMSSFSVVPSPKVSDVVLEPYNATLSVHQLVENTDETFCIDNEALYDICFRTLKLANPTYGDLNHLVSVTMSGVTTCLRFPGQLNADLRKLAVNMVPFPRLHFFMPGFAPLSARDAAAYRALNVAELTQQMFDAKNMMAACDPRHGRYLTVAAMFRGRMSMREVDEQMMQVQNKNSSYFVEWIPNNVKTAVCDIPPRGLKMSATFIGNTTAIQELFKRISEQFTAMFRRKAFLHWYTGEGMDEMEFTEAESNMNDLVSEYQQYQDATADEEGDLQEGESEYIEQEE.

Residues Gln11, Glu69, Ser138, Gly142, Thr143, Gly144, Asn204, and Asn226 each contribute to the GTP site. Glu69 is a binding site for Mg(2+). Residues Asp427 to Glu448 form a disordered region. Acidic residues predominate over residues Thr429–Glu448.

It belongs to the tubulin family. Dimer of alpha and beta chains. A typical microtubule is a hollow water-filled tube with an outer diameter of 25 nm and an inner diameter of 15 nM. Alpha-beta heterodimers associate head-to-tail to form protofilaments running lengthwise along the microtubule wall with the beta-tubulin subunit facing the microtubule plus end conferring a structural polarity. Microtubules usually have 13 protofilaments but different protofilament numbers can be found in some organisms and specialized cells. Requires Mg(2+) as cofactor.

It localises to the cytoplasm. The protein resides in the cytoskeleton. In terms of biological role, tubulin is the major constituent of microtubules, a cylinder consisting of laterally associated linear protofilaments composed of alpha- and beta-tubulin heterodimers. Microtubules grow by the addition of GTP-tubulin dimers to the microtubule end, where a stabilizing cap forms. Below the cap, tubulin dimers are in GDP-bound state, owing to GTPase activity of alpha-tubulin. This chain is Tubulin beta-1 chain, found in Brugia pahangi (Filarial nematode worm).